Reading from the N-terminus, the 264-residue chain is 3-methyl-2-oxobutanoate hydroxymethyltransferase (264 aa).

D46 and D85 together coordinate Mg(2+). 3-methyl-2-oxobutanoate-binding positions include 46–47 (DS), D85, and K113. Residue E115 coordinates Mg(2+). E181 serves as the catalytic Proton acceptor.

Belongs to the PanB family. Homodecamer; pentamer of dimers. Mg(2+) is required as a cofactor.

It is found in the cytoplasm. The catalysed reaction is 3-methyl-2-oxobutanoate + (6R)-5,10-methylene-5,6,7,8-tetrahydrofolate + H2O = 2-dehydropantoate + (6S)-5,6,7,8-tetrahydrofolate. It functions in the pathway cofactor biosynthesis; (R)-pantothenate biosynthesis; (R)-pantoate from 3-methyl-2-oxobutanoate: step 1/2. Its function is as follows. Catalyzes the reversible reaction in which hydroxymethyl group from 5,10-methylenetetrahydrofolate is transferred onto alpha-ketoisovalerate to form ketopantoate. The protein is 3-methyl-2-oxobutanoate hydroxymethyltransferase of Salmonella typhi.